The following is a 1414-amino-acid chain: DNA-directed RNA polymerase subunit beta' (1414 aa).

Residues cysteine 72, cysteine 74, cysteine 87, and cysteine 90 each contribute to the Zn(2+) site. Residues aspartate 463, aspartate 465, and aspartate 467 each coordinate Mg(2+). Zn(2+) is bound by residues cysteine 811, cysteine 885, cysteine 892, and cysteine 895.

This sequence belongs to the RNA polymerase beta' chain family. As to quaternary structure, the RNAP catalytic core consists of 2 alpha, 1 beta, 1 beta' and 1 omega subunit. When a sigma factor is associated with the core the holoenzyme is formed, which can initiate transcription. Requires Mg(2+) as cofactor. Zn(2+) serves as cofactor.

It catalyses the reaction RNA(n) + a ribonucleoside 5'-triphosphate = RNA(n+1) + diphosphate. DNA-dependent RNA polymerase catalyzes the transcription of DNA into RNA using the four ribonucleoside triphosphates as substrates. The chain is DNA-directed RNA polymerase subunit beta' from Roseobacter denitrificans (strain ATCC 33942 / OCh 114) (Erythrobacter sp. (strain OCh 114)).